We begin with the raw amino-acid sequence, 450 residues long: Protein W (450 aa).

The disordered stretch occupies residues Ser-53–Val-92. Over residues Met-63 to Glu-76 the composition is skewed to basic and acidic residues. Phosphoserine; by host is present on Ser-257. The interval Ile-265–Arg-324 is disordered. Position 350 is a phosphoserine; by host (Ser-350). 2 disordered regions span residues Val-384–Pro-403 and Pro-429–Asn-450. The segment covering Thr-438–Asn-450 has biased composition (basic residues). Positions Lys-439 to Arg-442 match the Nuclear localization signal motif.

In terms of assembly, interacts with host STAT1.

It is found in the host nucleus. Functionally, prevent the establishment of cellular antiviral state by blocking the interferon-alpha/beta (IFN-alpha/beta). Interacts with host STAT1 protein in the nucleus, blocking it's phosphorylation by IFN-alpha/beta. Also blocks antiviral state induced by Toll-like receptor 3/TLR3 binding to dsRNA. This is Protein W (P/V/C) from Cynopterus brachyotis (Lesser short-nosed fruit bat).